The sequence spans 445 residues: Phosphoglucosamine mutase 1 (445 aa).

Residue S102 is the Phosphoserine intermediate of the active site. Residues S102, D241, D243, and D245 each contribute to the Mg(2+) site. S102 is modified (phosphoserine).

Belongs to the phosphohexose mutase family. The cofactor is Mg(2+). Post-translationally, activated by phosphorylation.

It carries out the reaction alpha-D-glucosamine 1-phosphate = D-glucosamine 6-phosphate. Its function is as follows. Catalyzes the conversion of glucosamine-6-phosphate to glucosamine-1-phosphate. The protein is Phosphoglucosamine mutase 1 of Shewanella frigidimarina (strain NCIMB 400).